Consider the following 146-residue polypeptide: Hemoglobin subunit beta (146 aa).

One can recognise a Globin domain in the interval 2 to 146 (QWTAEEKQLI…VAHALARKYH (145 aa)). Residues histidine 63 and histidine 92 each coordinate heme b.

Belongs to the globin family. In terms of assembly, heterotetramer of two alpha chains and two beta chains. As to expression, red blood cells.

Involved in oxygen transport from the lung to the various peripheral tissues. The protein is Hemoglobin subunit beta (HBB) of Passer montanus (Eurasian tree sparrow).